A 577-amino-acid polypeptide reads, in one-letter code: 2-succinyl-5-enolpyruvyl-6-hydroxy-3-cyclohexene-1-carboxylate synthase (577 aa).

It belongs to the TPP enzyme family. MenD subfamily. Homodimer. Mg(2+) is required as a cofactor. The cofactor is Mn(2+). Thiamine diphosphate serves as cofactor.

The catalysed reaction is isochorismate + 2-oxoglutarate + H(+) = 5-enolpyruvoyl-6-hydroxy-2-succinyl-cyclohex-3-ene-1-carboxylate + CO2. The protein operates within quinol/quinone metabolism; 1,4-dihydroxy-2-naphthoate biosynthesis; 1,4-dihydroxy-2-naphthoate from chorismate: step 2/7. It participates in quinol/quinone metabolism; menaquinone biosynthesis. Its function is as follows. Catalyzes the thiamine diphosphate-dependent decarboxylation of 2-oxoglutarate and the subsequent addition of the resulting succinic semialdehyde-thiamine pyrophosphate anion to isochorismate to yield 2-succinyl-5-enolpyruvyl-6-hydroxy-3-cyclohexene-1-carboxylate (SEPHCHC). The sequence is that of 2-succinyl-5-enolpyruvyl-6-hydroxy-3-cyclohexene-1-carboxylate synthase from Christiangramia forsetii (strain DSM 17595 / CGMCC 1.15422 / KT0803) (Gramella forsetii).